We begin with the raw amino-acid sequence, 87 residues long: MIRFVLFISCFFLIGTVVECNKDGYLMEGDGCKMGCLTRKASYCVDQCKEVGGKDGYCYAWLSCYCYNMPDSVEIWDSKNNKCGKGK.

The signal sequence occupies residues 1–20 (MIRFVLFISCFFLIGTVVEC). The LCN-type CS-alpha/beta domain occupies 22 to 84 (KDGYLMEGDG…IWDSKNNKCG (63 aa)). 4 cysteine pairs are disulfide-bonded: cysteine 32/cysteine 83, cysteine 36/cysteine 58, cysteine 44/cysteine 64, and cysteine 48/cysteine 66. Lysine 85 is subject to Lysine amide.

In terms of tissue distribution, expressed by the venom gland.

It is found in the secreted. Its function is as follows. Alpha toxins bind voltage-independently at site-3 of sodium channels (Nav) and inhibit the inactivation of the activated channels, thereby blocking neuronal transmission. Affects the tetrodotoxin-sensitive sodium current permeability of F-11 rat neuroblastoma cells. Produces a dose dependent increase in amplitude and duration of the current. This Tityus obscurus (Amazonian scorpion) protein is Alpha-toxin To2.